A 278-amino-acid polypeptide reads, in one-letter code: MDVRQSIHSAHAKTLDTQGLRNEFLVEKVFVADEYTMVYSHIDRIIVGGIMPVTKTVSVGGEVGKQLGVSYFLERRELGVINIGGAGTIAVDGQCYEIGHRDALYVGKGAKEVVFASIDTATPAKFYYNCAPAHTTYPTKKVTPDEVSPVTLGDNLTSNRRTINKYFVPDVLETCQLSMGLTELAPGNLWNTMPCHTHERRMEVYFYFNMDDDACVFHMMGQPQETRHIVMHNEQAVISPSWSIHSGVGTKAYTFIWGMVGENQVFDDMDHVAVKDLR.

H196, H198, E203, and H245 together coordinate Zn(2+).

Belongs to the KduI family. As to quaternary structure, homohexamer. Requires Zn(2+) as cofactor.

It catalyses the reaction 5-dehydro-4-deoxy-D-glucuronate = 3-deoxy-D-glycero-2,5-hexodiulosonate. The protein operates within glycan metabolism; pectin degradation; 2-dehydro-3-deoxy-D-gluconate from pectin: step 4/5. Catalyzes the isomerization of 5-dehydro-4-deoxy-D-glucuronate to 3-deoxy-D-glycero-2,5-hexodiulosonate. This chain is 4-deoxy-L-threo-5-hexosulose-uronate ketol-isomerase, found in Escherichia coli O139:H28 (strain E24377A / ETEC).